We begin with the raw amino-acid sequence, 99 residues long: Protein IDA-LIKE 3 (99 aa).

The signal sequence occupies residues Met-1–Gly-32. The segment covering Thr-36–Pro-45 has biased composition (polar residues). Disordered regions lie at residues Thr-36–Val-58 and Ser-73–Thr-99. A compositionally biased stretch (basic and acidic residues) spans Lys-46 to Val-58.

Expressed in flowers and seedlings. Detected at the base of pedicel, in the floral abscission zone and in vascular tissues.

Its subcellular location is the secreted. It localises to the extracellular space. In terms of biological role, may be involved in floral abscission. This Arabidopsis thaliana (Mouse-ear cress) protein is Protein IDA-LIKE 3 (IDL3).